Here is a 400-residue protein sequence, read N- to C-terminus: Succinate--glutarate CoA-transferase (400 aa).

The active-site Nucleophile is Asp-181.

The protein belongs to the CoA-transferase III family.

The enzyme catalyses glutarate + succinyl-CoA = glutaryl-CoA + succinate. The protein operates within amino-acid degradation. It functions in the pathway cofactor biosynthesis; biotin biosynthesis. Functionally, is involved in L-lysine degradation and provides glutaryl-CoA for biotin synthesis. Catalyzes the conversion of glutarate to glutaryl-CoA via the transfer of CoA from succinyl-CoA. This chain is Succinate--glutarate CoA-transferase, found in Agrobacterium fabrum (strain C58 / ATCC 33970) (Agrobacterium tumefaciens (strain C58)).